A 378-amino-acid chain; its full sequence is Trans-enoyl reductase poxP (378 aa).

Position 62–65 (62–65) interacts with NADP(+); that stretch reads CDWK. 151–158 is a substrate binding site; that stretch reads SVFATLWI. NADP(+)-binding positions include 187–190, 210–213, Tyr-228, and 275–276; these read STST, SPHN, and LE. Residue 295-299 coordinates substrate; that stretch reads GLAAS. Position 364-365 (364-365) interacts with NADP(+); that stretch reads TS.

Belongs to the zinc-containing alcohol dehydrogenase family. Monomer.

It participates in secondary metabolite biosynthesis. Its function is as follows. Trans-enoyl reductase; part of the gene cluster that mediates the biosynthesis of oxaleimides, cytotoxic compounds containing an unusual disubstituted succinimide moiety. The first step of the pathway is provided by the HR-PKS poxF that serves in a new mode of collaborative biosynthesis with the PKS-NRPS poxE, by providing the olefin containing amino acid substrate via the synthesis of an ACP-bound dec-4-enoate. The cytochrome P450 monooxygenase poxM-catalyzed oxidation at the alpha-position creates the enzyme-bound 2-hydroxydec-4-enoyl-ACP thioester, which may be prone to spontaneous hydrolysis to yield 2-hydroxydec-4-enoic acid due to increased electrophilicity of the carbonyl. 2-hydroxydec-4-enoic acid can then be further oxidized by poxM to yield the alpha-ketoacid 2-oxodec-4-enoicacid, which is reductively aminated by the aminotransferase poxL to yield (S,E)-2-aminodec-4-enoic acid. The Hybrid PKS-NRPS synthetase poxE then performs condensation between the octaketide product of its PKS modules and the amino group of (S,E)-2-aminodec-4-enoic acid which is activated and incorporated by the adenylation domain. The resulting aminoacyl product can be cyclized by the Diels-Alderase PoxQ and reductively released by the reductive (R) domain of poxE to yield an aldehyde intermediate. The released aldehyde is then substrate for a Knoevenagel condensation by the hydrolyase poxO followed by an oxidation at the 5-position of the pyrrolidone ring. The presence of the olefin from the amino acid building block allows for migration of the substituted allyl group to occur. This allylic transposition reaction takes place in a conjugate addition, semipinacol-like fashion to yield a succinimide intermediate. Iterative two-electron oxidations of the C7 methyl of the succinimide intermediate to the carboxylic acid can be catalyzed by one of two remaining cytochrome P450 monooxygenasess poxC or poxD to yield oxaleimide A. Subsequent oxidation yields the maleimide scaffold oxaleimide I. Both oxaleimide A and oxaleimide I can undergo oxidative modifications in the decalin ring to yield the series of products oxaleimides B to H. The protein is Trans-enoyl reductase poxP of Penicillium oxalicum.